The chain runs to 4763 residues: Nonribosomal peptide synthetase sidC (4763 aa).

The segment at 1-24 is disordered; it reads MAGTANPADEGLTGPTETTNHINS. Residues 15 to 24 are compositionally biased toward polar residues; sequence PTETTNHINS. Residues 296–815 form an adenylation 1 region; it reads STVAEHSTLT…SSGKVDRNSI (520 aa). A Carrier 1 domain is found at 853 to 930; that stretch reads EKALELRTLV…GLLTLILNGK (78 aa). The residue at position 890 (serine 890) is an O-(pantetheine 4'-phosphoryl)serine. The interval 1003–1396 is condensation 1; it reads TRSYIYHSVI…DIIAFILQNP (394 aa). An adenylation 2 region spans residues 1398 to 1951; sequence GDFENALLYT…AKTDRRALQA (554 aa). Residues 1979–2055 form the Carrier 2 domain; it reads LVASDAMEKI…DLARLCTSSS (77 aa). Serine 2016 is subject to O-(pantetheine 4'-phosphoryl)serine. Positions 2092 to 2423 are condensation 2; it reads TPIQESLLSE…HIHAREVRRM (332 aa). The adenylation 3 stretch occupies residues 2556-3070; sequence ELNAREHPEW…MSGKANIKEL (515 aa). In terms of domain architecture, Carrier 3 spans 3099-3175; the sequence is RPLSSDEEAV…QLAQLPRKST (77 aa). Serine 3136 carries the post-translational modification O-(pantetheine 4'-phosphoryl)serine. The interval 3217–3626 is condensation 3; the sequence is PLQEGLVARS…DDIALDSFSL (410 aa). A Carrier 4 domain is found at 3647–3720; that stretch reads SATETKIRDL…ALAEHVDERS (74 aa). Serine 3681 is subject to O-(pantetheine 4'-phosphoryl)serine. Positions 3761–4093 are condensation 4; the sequence is TPLQAGMITR…SLFDTLFVFQ (333 aa). Positions 4204 to 4277 constitute a Carrier 5 domain; sequence PAHESIIRDV…GISARIISPV (74 aa). The residue at position 4238 (serine 4238) is an O-(pantetheine 4'-phosphoryl)serine. Residues 4344–4593 are condensation 5; it reads ERIDSGKLEE…PCLNVTPFTF (250 aa).

The protein belongs to the NRP synthetase family.

It participates in siderophore biosynthesis. Functionally, nonribosomal peptide synthase; part of the siderophore biosynthetic pathway. Aspergillus fumigatus produces four types of siderophores, low-molecular-mass iron chelators, including excreted fusarinine C (FsC) and triacetylfusarinine C (TAFC) for iron uptake; and intacellular ferricrocin (FC) for hyphal and hydroxyferricrocin (HFC) for conidial iron distribution and storage. TAFC consists of three N(2)-acetyl-N(5)-anhydromevalonyl-N(5)-hydroxyornithine residues cyclically linked by ester bonds; FC is a cyclic hexapeptide with the structure Gly-Ser-Gly-(N(5)-acetyl-N(5)-hydroxyornithine)x3. The biosynthesis of all four siderophores depends on the hydroxylation of ornithine, catalyzed by the monooxygenase sidA. Subsequently, the pathways for biosynthesis of extra- and intracellular siderophores split. For biosynthesis of extracellular siderophores, the transacylase sidF transfers anhydromevalonyl to N(5)-hydroxyornithine. The required anhydromevalonyl-CoA moiety is derived from mevalonate by CoA ligation and dehydration catalyzed by sidI and sidH respectively. The acetylation of N(5)-hydroxyornithine for FC biosynthesis involves the constitutively expressed sidL. FC is hydroxylated to HFC by an as yet uncharacterized enzyme during conidiation. Assembly of fusarinine C (FsC) and FC is catalyzed by two different nonribosomal peptide synthetases (NRPS), sidD and sidC respectively. Subsequently, sidG catalyzes N2-acetylation of FsC for forming TAFC. Both extra- and intracellular siderophores are crucial for growth during iron limitation and virulence. This Aspergillus fumigatus (strain ATCC MYA-4609 / CBS 101355 / FGSC A1100 / Af293) (Neosartorya fumigata) protein is Nonribosomal peptide synthetase sidC.